The chain runs to 1161 residues: Translation initiation factor IF-2 (1161 aa).

Residues K67–K561 are disordered. A compositionally biased stretch (basic and acidic residues) spans Q83–N105. The segment covering S139–N154 has biased composition (polar residues). 2 stretches are compositionally biased toward basic and acidic residues: residues N164 to S180 and K211 to D220. Low complexity-rich tracts occupy residues N224–K250 and N268–N282. Composition is skewed to polar residues over residues R295–S311, R352–P362, and L380–S393. Positions A412 to K432 are enriched in basic and acidic residues. Residues S440–K461 show a composition bias toward polar residues. Composition is skewed to basic and acidic residues over residues G464–R478 and K543–K561. The 178-residue stretch at K653–E830 folds into the tr-type G domain. Positions G662 to T669 are G1. G662–T669 provides a ligand contact to GTP. The tract at residues G687–H691 is G2. Positions D712–G715 are G3. GTP contacts are provided by residues D712 to H716 and N766 to D769. The G4 stretch occupies residues N766–D769. The G5 stretch occupies residues S802 to I804.

The protein belongs to the TRAFAC class translation factor GTPase superfamily. Classic translation factor GTPase family. IF-2 subfamily.

It localises to the cytoplasm. In terms of biological role, one of the essential components for the initiation of protein synthesis. Protects formylmethionyl-tRNA from spontaneous hydrolysis and promotes its binding to the 30S ribosomal subunits. Also involved in the hydrolysis of GTP during the formation of the 70S ribosomal complex. This is Translation initiation factor IF-2 from Prochlorococcus marinus (strain MIT 9515).